The chain runs to 89 residues: DNA-directed RNA polymerase subunit Rpo6 (89 aa).

It belongs to the archaeal Rpo6/eukaryotic RPB6 RNA polymerase subunit family. Part of the RNA polymerase complex.

Its subcellular location is the cytoplasm. The catalysed reaction is RNA(n) + a ribonucleoside 5'-triphosphate = RNA(n+1) + diphosphate. DNA-dependent RNA polymerase (RNAP) catalyzes the transcription of DNA into RNA using the four ribonucleoside triphosphates as substrates. The protein is DNA-directed RNA polymerase subunit Rpo6 of Aeropyrum pernix (strain ATCC 700893 / DSM 11879 / JCM 9820 / NBRC 100138 / K1).